Consider the following 371-residue polypeptide: Cytochrome b (371 aa).

The next 4 helical transmembrane spans lie at 25-45 (FGSM…FLAI), 69-90 (WIMQ…YIHI), 105-125 (WLSG…GYVL), and 170-190 (FCAL…IHII). His-75 and His-89 together coordinate heme b. Positions 174 and 188 each coordinate heme b. Residue His-193 participates in a ubiquinone binding. Transmembrane regions (helical) follow at residues 218–238 (YKDF…LSVS), 280–300 (LGGT…PFTH), 312–332 (LSQT…WTAT), and 339–358 (FITI…IMNP).

The protein belongs to the cytochrome b family. The cytochrome bc1 complex contains 3 respiratory subunits (MT-CYB, CYC1 and UQCRFS1), 2 core proteins (UQCRC1 and UQCRC2) and probably 6 low-molecular weight proteins. Requires heme b as cofactor.

It localises to the mitochondrion inner membrane. Its function is as follows. Component of the ubiquinol-cytochrome c reductase complex (complex III or cytochrome b-c1 complex) that is part of the mitochondrial respiratory chain. The b-c1 complex mediates electron transfer from ubiquinol to cytochrome c. Contributes to the generation of a proton gradient across the mitochondrial membrane that is then used for ATP synthesis. This Micrurus tener microgalbineus (Spotted coral snake) protein is Cytochrome b (MT-CYB).